The primary structure comprises 28 residues: Cruzioseptin-10 (28 aa).

Expressed by the skin glands.

Its subcellular location is the secreted. Its function is as follows. Has antimicrobial activity. This chain is Cruzioseptin-10, found in Cruziohyla calcarifer (Splendid leaf frog).